A 149-amino-acid polypeptide reads, in one-letter code: MKCPFCGFEESKVVDSRSTDDNTTIRRRRECLKCNKRYTTYEKIEDFPILVIKKDLTRENFNKEKIINGLIIACQKRPISRKQIEEIAYDIEKTISNSMLTEIPSNEIGEMVMARLKELDEISYVRFASVYRQFKDIDTFLEEIKNLRT.

Residues 3–34 (CPFCGFEESKVVDSRSTDDNTTIRRRRECLKC) fold into a zinc finger. Positions 49 to 139 (ILVIKKDLTR…VYRQFKDIDT (91 aa)) constitute an ATP-cone domain.

Belongs to the NrdR family. It depends on Zn(2+) as a cofactor.

Negatively regulates transcription of bacterial ribonucleotide reductase nrd genes and operons by binding to NrdR-boxes. This is Transcriptional repressor NrdR from Clostridium beijerinckii (strain ATCC 51743 / NCIMB 8052) (Clostridium acetobutylicum).